We begin with the raw amino-acid sequence, 951 residues long: Serine/threonine-protein phosphatase 4 regulatory subunit 1 (951 aa).

HEAT repeat units lie at residues 26 to 63 (ESDVIIIPSALDFVSQDEMLTPLGRLDKYAASENVFNR), 65 to 81 (MVARSLLDTLREVCDDE), 82 to 119 (RDCIAVLERISRLADDSEPTVRAELMEQVPHIALFCQE), 127 to 164 (AFSKYLLPIVVRYLADQNNQVRKTSQAALLALLEQELI), 168 to 206 (DVETKVCPVLIDLTAPDSNDDVKTEAVAIMCKMAPMVGK), 208 to 246 (ITERLILPRFCEMCCDCRMFHVRKVCAANFGDICSVVGQ), 248 to 285 (ATEEMLLPRFFQLCSDNVWGVRKACAECFMAVSCATCQ), and 287 to 324 (IRRTKLSALFINLISDPSRWVRQAAFQSLGPFISTFAN). 3 disordered regions span residues 325 to 377 (PSSS…HSSA), 411 to 451 (SESP…PLDQ), and 474 to 499 (QQDPEERLSPERTGDVPAAPLPGPPN). Over residues 332–365 (FKDESKSSEDSSAEDKDRMRDNDVVEEEHRRPED) the composition is skewed to basic and acidic residues. 2 stretches are compositionally biased toward polar residues: residues 411-421 (SESPQEAASND) and 430-445 (NSKSASRPDAGTSSPE). The span at 474–487 (QQDPEERLSPERTG) shows a compositional bias: basic and acidic residues. The stretch at 506–543 (KELEEMIENLEPHMDDPDVKAQVDVLSAALRASSLDAH) is one HEAT 9 repeat. The disordered stretch occupies residues 590–612 (DYVHGGADVSPGDGFSPDEDRRP). HEAT repeat units follow at residues 699–735 (LTAADLVPIFNGFLKDLDEVRIGVLKHLHDFLKLLHI), 800–838 (WISYKLVSEMVKKLHTATPPTFGVDLINELVENFGRCPK), and 862–899 (QFAVHLMPHLLTLANDRVPNVRVLLAKTLRQTLLEKEY). Serine 936 is modified (phosphoserine).

As to quaternary structure, serine/threonine-protein phosphatase 4 (PP4) occurs in different assemblies of the catalytic and one or more regulatory subunits. Component of the PP4 complex PPP4C-PPP4R1. Interacts with HDAC3.

Its function is as follows. Regulatory subunit of serine/threonine-protein phosphatase 4. May play a role in regulation of cell division in renal glomeruli. The PPP4C-PPP4R1 PP4 complex may play a role in dephosphorylation and regulation of HDAC3. Plays a role in the inhibition of TNF-induced NF-kappa-B activation by regulating the dephosphorylation of TRAF2. This chain is Serine/threonine-protein phosphatase 4 regulatory subunit 1 (Ppp4r1), found in Mus musculus (Mouse).